Reading from the N-terminus, the 409-residue chain is N-acetylglucosamine-6-phosphate deacetylase (409 aa).

E143 contacts a divalent metal cation. 154–155 (AH) provides a ligand contact to substrate. Positions 211 and 232 each coordinate a divalent metal cation. Substrate contacts are provided by residues 235–236 (NA), R243, and 269–272 (DGIH). Catalysis depends on D294, which acts as the Proton donor/acceptor. Substrate is bound at residue 328–330 (LGG).

The protein belongs to the metallo-dependent hydrolases superfamily. NagA family. A divalent metal cation is required as a cofactor.

It carries out the reaction N-acetyl-D-glucosamine 6-phosphate + H2O = D-glucosamine 6-phosphate + acetate. The protein operates within amino-sugar metabolism; N-acetylneuraminate degradation. Its function is as follows. Hydrolyzes the N-glycolyl group from N-glycolylglucosamine 6-phosphate (GlcNGc-6-P) in the N-glycolylneuraminic acid (Neu5Gc) degradation pathway. This Mus musculus (Mouse) protein is N-acetylglucosamine-6-phosphate deacetylase (Amdhd2).